Reading from the N-terminus, the 198-residue chain is FMN-dependent NADH:quinone oxidoreductase (198 aa).

FMN contacts are provided by residues Ser10, 16-18, 94-97, and 138-141; these read SQS, MYNF, and TRGG.

The protein belongs to the azoreductase type 1 family. Homodimer. Requires FMN as cofactor.

The catalysed reaction is 2 a quinone + NADH + H(+) = 2 a 1,4-benzosemiquinone + NAD(+). It carries out the reaction N,N-dimethyl-1,4-phenylenediamine + anthranilate + 2 NAD(+) = 2-(4-dimethylaminophenyl)diazenylbenzoate + 2 NADH + 2 H(+). In terms of biological role, quinone reductase that provides resistance to thiol-specific stress caused by electrophilic quinones. Its function is as follows. Also exhibits azoreductase activity. Catalyzes the reductive cleavage of the azo bond in aromatic azo compounds to the corresponding amines. This Shewanella sp. (strain ANA-3) protein is FMN-dependent NADH:quinone oxidoreductase.